The chain runs to 690 residues: Elongation factor G (690 aa).

In terms of domain architecture, tr-type G spans 8–283 (EKYRNIGIMA…AVVDYLPSPL (276 aa)). Residues 17–24 (AHIDAGKT), 81–85 (DTPGH), and 135–138 (NKLD) contribute to the GTP site.

This sequence belongs to the TRAFAC class translation factor GTPase superfamily. Classic translation factor GTPase family. EF-G/EF-2 subfamily.

The protein resides in the cytoplasm. Catalyzes the GTP-dependent ribosomal translocation step during translation elongation. During this step, the ribosome changes from the pre-translocational (PRE) to the post-translocational (POST) state as the newly formed A-site-bound peptidyl-tRNA and P-site-bound deacylated tRNA move to the P and E sites, respectively. Catalyzes the coordinated movement of the two tRNA molecules, the mRNA and conformational changes in the ribosome. This is Elongation factor G from Rhizorhabdus wittichii (strain DSM 6014 / CCUG 31198 / JCM 15750 / NBRC 105917 / EY 4224 / RW1) (Sphingomonas wittichii).